We begin with the raw amino-acid sequence, 301 residues long: Retinochrome (301 aa).

Residues 1 to 17 (MFGNPAMTGLHQFTMWE) are Extracellular-facing. Residues 18–43 (HYFTGSIYLVLGCVVFSLCGMCIIFL) traverse the membrane as a helical segment. Over 44-54 (ARQSPKPRRKY) the chain is Cytoplasmic. The helical transmembrane segment at 55-76 (AILIHVLITAMAVNGGDPAHAS) threads the bilayer. The Extracellular segment spans residues 77 to 94 (SSIVGRWLYGSVGCQLMG). Residues 95–120 (FWGFFGGMSHIWMLFAFAMERYMAVC) form a helical membrane-spanning segment. Over 121–132 (HREFYQQMPSVY) the chain is Cytoplasmic. A helical membrane pass occupies residues 133–153 (YSIIVGLMYTFGTFWATMPLL). The Extracellular portion of the chain corresponds to 154–180 (GWASYGLEVHGTSCTINYSVSDESYQS). The N-linked (GlcNAc...) asparagine glycan is linked to asparagine 170. The chain crosses the membrane as a helical span at residues 181–208 (YVFFLAIFSFIFPMVSGWYAISKAWSGL). Residues 209 to 230 (SAIPDAEKEKDKDILSEEQLTA) are Cytoplasmic-facing. The helical transmembrane segment at 231-255 (LAGAFILISLISWSGFGYVAIYSAL) threads the bilayer. Topologically, residues 256 to 264 (THGGAQLSH) are extracellular. Residues 265-289 (LRGHVPPIMSKTGCALFPLLIFLLT) traverse the membrane as a helical segment. Lysine 275 carries the N6-(retinylidene)lysine modification. The Cytoplasmic segment spans residues 290 to 301 (ARSLPKSDTKKP).

This sequence belongs to the G-protein coupled receptor 1 family. Opsin subfamily. Mainly stored in myeloid bodies of the inner segments.

The protein resides in the membrane. In terms of biological role, retinochrome is capable of acting as an effective catalyst in the light to convert various isomers of retinal into 11-cis, the form that is required by opsin to resynthesize rhodopsin. The protein is Retinochrome of Todarodes pacificus (Japanese flying squid).